Consider the following 627-residue polypeptide: DNA-directed RNA polymerase subunit gamma (627 aa).

Residues cysteine 70, cysteine 72, cysteine 85, and cysteine 88 each coordinate Zn(2+). 3 residues coordinate Mg(2+): aspartate 468, aspartate 470, and aspartate 472.

This sequence belongs to the RNA polymerase beta' chain family. RpoC1 subfamily. In terms of assembly, in cyanobacteria the RNAP catalytic core is composed of 2 alpha, 1 beta, 1 beta', 1 gamma and 1 omega subunit. When a sigma factor is associated with the core the holoenzyme is formed, which can initiate transcription. Mg(2+) is required as a cofactor. It depends on Zn(2+) as a cofactor.

The catalysed reaction is RNA(n) + a ribonucleoside 5'-triphosphate = RNA(n+1) + diphosphate. DNA-dependent RNA polymerase catalyzes the transcription of DNA into RNA using the four ribonucleoside triphosphates as substrates. The chain is DNA-directed RNA polymerase subunit gamma from Synechococcus sp. (strain JA-3-3Ab) (Cyanobacteria bacterium Yellowstone A-Prime).